A 92-amino-acid polypeptide reads, in one-letter code: Small ribosomal subunit protein uS19 (92 aa).

Belongs to the universal ribosomal protein uS19 family.

Functionally, protein S19 forms a complex with S13 that binds strongly to the 16S ribosomal RNA. This chain is Small ribosomal subunit protein uS19, found in Polaromonas naphthalenivorans (strain CJ2).